A 62-amino-acid polypeptide reads, in one-letter code: Small ribosomal subunit protein eS27 (62 aa).

Cysteine 17, cysteine 20, cysteine 36, and cysteine 39 together coordinate Zn(2+). The segment at 17-39 adopts a C4-type zinc-finger fold; sequence CPDCDNEQTVFSKASTTVKCVVC.

The protein belongs to the eukaryotic ribosomal protein eS27 family. In terms of assembly, part of the 30S ribosomal subunit. The cofactor is Zn(2+).

This Methanoregula boonei (strain DSM 21154 / JCM 14090 / 6A8) protein is Small ribosomal subunit protein eS27.